The following is a 314-amino-acid chain: Caspase-like protein (314 aa).

It belongs to the peptidase C14A family.

Functionally, may be involved in viral replication. In Heliothis virescens ascovirus 3e (HvAV-3e), this protein is Caspase-like protein.